We begin with the raw amino-acid sequence, 211 residues long: ATP-dependent Clp protease proteolytic subunit (211 aa).

Residue Ser107 is the Nucleophile of the active site. Residue His132 is part of the active site.

It belongs to the peptidase S14 family. In terms of assembly, fourteen ClpP subunits assemble into 2 heptameric rings which stack back to back to give a disk-like structure with a central cavity, resembling the structure of eukaryotic proteasomes.

It is found in the cytoplasm. It catalyses the reaction Hydrolysis of proteins to small peptides in the presence of ATP and magnesium. alpha-casein is the usual test substrate. In the absence of ATP, only oligopeptides shorter than five residues are hydrolyzed (such as succinyl-Leu-Tyr-|-NHMec, and Leu-Tyr-Leu-|-Tyr-Trp, in which cleavage of the -Tyr-|-Leu- and -Tyr-|-Trp bonds also occurs).. In terms of biological role, cleaves peptides in various proteins in a process that requires ATP hydrolysis. Has a chymotrypsin-like activity. Plays a major role in the degradation of misfolded proteins. This Xanthobacter autotrophicus (strain ATCC BAA-1158 / Py2) protein is ATP-dependent Clp protease proteolytic subunit.